The following is a 134-amino-acid chain: Histone H2A (134 aa).

Residues 1 to 11 (MTGGGKSGGKA) are compositionally biased toward gly residues. A disordered region spans residues 1-25 (MTGGGKSGGKASGSKNAQSRSSKAG). Residues Lys6 and Lys10 each carry the N6-acetyllysine modification. Position 107 is an N5-methylglutamine (Gln107). Ser131 bears the Phosphoserine mark. The [ST]-Q motif signature appears at 131 to 132 (SQ).

Belongs to the histone H2A family. As to quaternary structure, the nucleosome is a histone octamer containing two molecules each of H2A, H2B, H3 and H4 assembled in one H3-H4 heterotetramer and two H2A-H2B heterodimers. The octamer wraps approximately 147 bp of DNA. Post-translationally, phosphorylated to form H2AS128ph (gamma-H2A) in response to DNA double-strand breaks (DSBs) generated by exogenous genotoxic agents and by stalled replication forks. Phosphorylation is dependent on the DNA damage checkpoint kinases mec-1/ATR and tel-1/ATM, spreads on either side of a detected DSB site and may mark the surrounding chromatin for recruitment of proteins required for DNA damage signaling and repair. Gamma-H2A is removed from the DNA prior to the strand invasion-primer extension step of the repair process and subsequently dephosphorylated. Dephosphorylation is necessary for efficient recovery from the DNA damage checkpoint. Acetylated by esa-1 to form H2AK4ac and H2AK7ac.

Its subcellular location is the nucleus. It localises to the chromosome. Its function is as follows. Core component of nucleosome which plays a central role in DNA double strand break (DSB) repair. Nucleosomes wrap and compact DNA into chromatin, limiting DNA accessibility to the cellular machineries which require DNA as a template. Histones thereby play a central role in transcription regulation, DNA repair, DNA replication and chromosomal stability. DNA accessibility is regulated via a complex set of post-translational modifications of histones, also called histone code, and nucleosome remodeling. In Neurospora crassa (strain ATCC 24698 / 74-OR23-1A / CBS 708.71 / DSM 1257 / FGSC 987), this protein is Histone H2A (hh2a).